The chain runs to 604 residues: Complement factor I (604 aa).

An N-terminal signal peptide occupies residues 1–18; it reads MKLALLILLLLNPHLSSS. Disulfide bonds link Cys36–Cys260, Cys46–Cys57, Cys51–Cys62, Cys64–Cys96, Cys70–Cys89, Cys78–Cys109, Cys144–Cys186, Cys157–Cys219, Cys191–Cys201, Cys234–Cys252, Cys246–Cys261, Cys264–Cys276, Cys271–Cys289, Cys283–Cys298, Cys349–Cys474, Cys387–Cys403, Cys395–Cys465, Cys488–Cys552, Cys516–Cys531, and Cys542–Cys571. The N-linked (GlcNAc...) asparagine glycan is linked to Asn40. Positions 58–111 constitute a Kazal-like domain; the sequence is IEGTCACKLPYQCPKAGTPVCATNGRGYPTYCHLKSFECLHPEIKFSNNGTCTA. Residues Asn106, Asn116, and Asn182 are each glycosylated (N-linked (GlcNAc...) asparagine). One can recognise an SRCR domain in the interval 117–217; that stretch reads VSLIYGSTDT…SKAPHGLAGV (101 aa). 2 LDL-receptor class A domains span residues 218–262 and 263–299; these read VCYT…LCCK and GCRG…SGCE. 6 residues coordinate Ca(2+): Lys244, Asp247, Val249, Asp251, Asp257, and Glu258. Positions 284, 286, 288, 294, and 295 each coordinate Ca(2+). The 234-residue stretch at 362–595 folds into the Peptidase S1 domain; that stretch reads VVGGKPAEMG…YFDWISYYVG (234 aa). Residues His402 and Asp450 each act as charge relay system in the active site. Residue Asn515 is glycosylated (N-linked (GlcNAc...) asparagine). Ser546 serves as the catalytic Charge relay system. N-linked (GlcNAc...) asparagine glycosylation is present at Asn557.

The protein belongs to the peptidase S1 family. In terms of assembly, heterodimer of a light and heavy chains; disulfide-linked. The fully processed and mature protein circulates as a zymogen, and is allosterically activated by substrate-induced remodeling of the active site. Interacts with C3b. Interacts with complement factor H. In terms of tissue distribution, expressed in the liver by hepatocytes. Also present in other cells such as monocytes, fibroblasts or keratinocytes.

The protein resides in the secreted. It localises to the extracellular space. The catalysed reaction is Inactivates complement subcomponents C3b, iC3b and C4b by proteolytic cleavage.. Functionally, trypsin-like serine protease that plays an essential role in regulating the immune response by controlling all complement pathways. Inhibits these pathways by cleaving three peptide bonds in the alpha-chain of C3b and two bonds in the alpha-chain of C4b thereby inactivating these proteins. Essential cofactors for these reactions include factor H and C4BP in the fluid phase and membrane cofactor protein/CD46 and CR1 on cell surfaces. The presence of these cofactors on healthy cells allows degradation of deposited C3b by CFI in order to prevent undesired complement activation, while in apoptotic cells or microbes, the absence of such cofactors leads to C3b-mediated complement activation and subsequent opsonization. In Rattus norvegicus (Rat), this protein is Complement factor I (Cfi).